The chain runs to 129 residues: Small ribosomal subunit protein uS11 (129 aa).

This sequence belongs to the universal ribosomal protein uS11 family. As to quaternary structure, part of the 30S ribosomal subunit. Interacts with proteins S7 and S18. Binds to IF-3.

Functionally, located on the platform of the 30S subunit, it bridges several disparate RNA helices of the 16S rRNA. Forms part of the Shine-Dalgarno cleft in the 70S ribosome. The sequence is that of Small ribosomal subunit protein uS11 from Mesorhizobium japonicum (strain LMG 29417 / CECT 9101 / MAFF 303099) (Mesorhizobium loti (strain MAFF 303099)).